The following is a 323-amino-acid chain: tRNA U34 carboxymethyltransferase (323 aa).

Carboxy-S-adenosyl-L-methionine contacts are provided by residues Lys-91, Trp-105, Lys-110, Gly-130, 152–154 (DPT), 181–182 (IE), Met-196, Tyr-200, and Arg-315.

It belongs to the class I-like SAM-binding methyltransferase superfamily. CmoB family. Homotetramer.

The catalysed reaction is carboxy-S-adenosyl-L-methionine + 5-hydroxyuridine(34) in tRNA = 5-carboxymethoxyuridine(34) in tRNA + S-adenosyl-L-homocysteine + H(+). Its function is as follows. Catalyzes carboxymethyl transfer from carboxy-S-adenosyl-L-methionine (Cx-SAM) to 5-hydroxyuridine (ho5U) to form 5-carboxymethoxyuridine (cmo5U) at position 34 in tRNAs. This chain is tRNA U34 carboxymethyltransferase, found in Salmonella paratyphi B (strain ATCC BAA-1250 / SPB7).